Consider the following 87-residue polypeptide: Precursor of CEP8 (87 aa).

The N-terminal stretch at 1 to 29 (MAKALFFNFCISLLIIAILVSHEIIPTEA) is a signal peptide. A propeptide spanning residues 30 to 72 (RHLRTHRKSIKNSTLTVHEGAGGLRTGGGSVKTDISKEEHGVD) is cleaved from the precursor. Asn-41 is a glycosylation site (N-linked (GlcNAc...) asparagine). The segment at 41-87 (NSTLTVHEGAGGLRTGGGSVKTDISKEEHGVDEFRPTTPGNSPGIGH) is disordered. The span at 49–59 (GAGGLRTGGGS) shows a compositional bias: gly residues. Basic and acidic residues predominate over residues 63–75 (DISKEEHGVDEFR). Hydroxyproline is present on residues Pro-76, Pro-79, and Pro-83.

The protein belongs to the C-terminally encoded plant signaling peptide (CEP) family. In terms of assembly, interacts with CEP receptors (e.g. CEPR1 and CEPR2). The mature small signaling peptide is generated by proteolytic processing of the longer precursor. As to expression, expressed in lateral root primordia and in lateral roots excluding the meristem region. Also present in the aerial tissues, such as leaf petioles and the shoot apex region.

It is found in the secreted. The protein resides in the extracellular space. It localises to the apoplast. Its function is as follows. Extracellular signaling peptide that may regulate primary root growth rate and systemic nitrogen (N)-demand signaling. Mediates up-regulation of genes involved in N uptake and assimilation pathways. This chain is Precursor of CEP8, found in Arabidopsis thaliana (Mouse-ear cress).